A 197-amino-acid polypeptide reads, in one-letter code: Fe/S biogenesis protein NfuA (197 aa).

[4Fe-4S] cluster is bound by residues C155 and C158.

This sequence belongs to the NfuA family. In terms of assembly, homodimer. The cofactor is [4Fe-4S] cluster.

Functionally, involved in iron-sulfur cluster biogenesis. Binds a 4Fe-4S cluster, can transfer this cluster to apoproteins, and thereby intervenes in the maturation of Fe/S proteins. Could also act as a scaffold/chaperone for damaged Fe/S proteins. In Pseudomonas savastanoi pv. phaseolicola (strain 1448A / Race 6) (Pseudomonas syringae pv. phaseolicola (strain 1448A / Race 6)), this protein is Fe/S biogenesis protein NfuA.